An 871-amino-acid chain; its full sequence is Chaperone protein ClpB 1 (871 aa).

One can recognise a Clp R domain in the interval 6 to 147 (PNQFTEKAWA…REAIQQIRGS (142 aa)). Repeat stretches follow at residues 9–73 (FTEK…ISRQ) and 84–147 (LGQS…IRGS). Residues 160-341 (AALEKYGRDL…RRFQQVYVDQ (182 aa)) form an NBD1 region. 207-214 (GEPGVGKT) lines the ATP pocket. The segment at 342–550 (PSVEDTISIL…IAEIISKWTG (209 aa)) is linker. Residues 392 to 526 (IDLVDEAAAK…AEAKLREIQV (135 aa)) are a coiled coil. The tract at residues 560 to 771 (EAQKLLHLEE…RVDEFIIFHS (212 aa)) is NBD2. 610–617 (GPTGVGKT) is a binding site for ATP. Residues 772-871 (LRKDQLRQIV…FRRQVELATV (100 aa)) are C-terminal.

The protein belongs to the ClpA/ClpB family. In terms of assembly, homohexamer. The oligomerization is ATP-dependent.

The protein localises to the cytoplasm. Functionally, part of a stress-induced multi-chaperone system, it is involved in the recovery of the cell from heat-induced damage, in cooperation with DnaK, DnaJ and GrpE. Acts before DnaK, in the processing of protein aggregates. Protein binding stimulates the ATPase activity; ATP hydrolysis unfolds the denatured protein aggregates, which probably helps expose new hydrophobic binding sites on the surface of ClpB-bound aggregates, contributing to the solubilization and refolding of denatured protein aggregates by DnaK. The protein is Chaperone protein ClpB 1 (clpB1) of Thermosynechococcus vestitus (strain NIES-2133 / IAM M-273 / BP-1).